A 330-amino-acid polypeptide reads, in one-letter code: Aspartate--ammonia ligase (330 aa).

Belongs to the class-II aminoacyl-tRNA synthetase family. AsnA subfamily.

The protein resides in the cytoplasm. It carries out the reaction L-aspartate + NH4(+) + ATP = L-asparagine + AMP + diphosphate + H(+). Its pathway is amino-acid biosynthesis; L-asparagine biosynthesis; L-asparagine from L-aspartate (ammonia route): step 1/1. The protein is Aspartate--ammonia ligase of Yersinia pseudotuberculosis serotype O:1b (strain IP 31758).